The chain runs to 2382 residues: Nonribosomal peptide synthetase chyA (2382 aa).

The interval 204–607 is adenylation 1; it reads QKCATQPESI…LGRKDHQVKI (404 aa). The Carrier 1 domain occupies 745–821; sequence TPTTQNQRIL…DMASVLVKDH (77 aa). Serine 782 bears the O-(pantetheine 4'-phosphoryl)serine mark. The condensation 1 stretch occupies residues 857–1269; it reads EDVYPCTHMQ…LVPPEDMATL (413 aa). An adenylation 2 region spans residues 1294–1687; the sequence is GQPDTLAIHS…VGRKDDQVKL (394 aa). A Carrier 2 domain is found at 1833-1909; sequence VPVSIHGRKV…GLSLKCATEN (77 aa). Serine 1870 is subject to O-(pantetheine 4'-phosphoryl)serine. The segment at 1967-2373 is condensation 2; it reads MTLHNFYSRY…FSDVIESLAS (407 aa).

Belongs to the NRP synthetase family.

Its pathway is pigment biosynthesis. Its function is as follows. Nonribosomal peptide synthetase; part of the gene cluster that mediates the biosynthesis of the yellow pigment chrysogine. the NRPS chyA mediates the condensation of anthranilic acid and alanine into the intermediate 2-(2-aminopropanamido)benzoic acid. The remainder of the pathway is highly branched yielding at least 13 chrysogine-related compounds. The malonyl transferase chyE converts 2-(2-aminopropanamido)benzoic acid and 2-(2-aminopropanamido)benzamidine into 2-(2-(2-carboxyacetamido)propanamido)benzoic acid and 3-((1-((2-carbamoylphenyl)amino)-1-oxopropan-2-yl)amino)-3-oxopropanoic acid, respectively. ChyD is an amidase, being responsible for the amidation of the carboxylic acid moiety of 2-(2-aminopropanamido)benzoic acid, 2-(2-(2-carboxyacetamido)propanamido)benzoic acid and 2-(2-((4-amino-1-carboxy-4-oxobutyl)amino)propanamido)benzoic acid. ChyC is involved in the same reactions as ChyD, but plays a more minor role in the amidation reactions compared to chyD. The oxidoreductases chyH and chyM are involved in oxidation reactions that form N-pyruvoylanthranilamide from 2-(2-aminopropanamido)benzamidine and (1-((2-carbamoylphenyl)amino)-1-oxopropan-2-yl)glutamine, respectively. N-pyruvoylanthranilamide is further converted via two further branches in the pathway, yielding chrysogine and additional chrysogine-related coumpounds. Chrysogine is likely formed by a spontaneous ring closure from N-pyruvoylanthranilamide. The chain is Nonribosomal peptide synthetase chyA from Penicillium rubens (strain ATCC 28089 / DSM 1075 / NRRL 1951 / Wisconsin 54-1255) (Penicillium chrysogenum).